The sequence spans 752 residues: Complement C2 (752 aa).

An N-terminal signal peptide occupies residues 1 to 20 (MGPLMVLFCLLFLYPGLADS). Sushi domains lie at 22-86 (PSCP…VCKP), 87-146 (VRCP…VCDN), and 149-206 (GHCP…ICRQ). 6 disulfide bridges follow: Cys24–Cys64, Cys51–Cys84, Cys89–Cys131, Cys117–Cys144, Cys151–Cys191, and Cys177–Cys204. Asn29 is a glycosylation site (N-linked (GlcNAc...) asparagine). A glycan (N-linked (GlcNAc...) asparagine) is linked at Asn112. The VWFA domain occupies 254-452 (NLYLLLDCSQ…KALHQVFEHM (199 aa)). Residues 260 to 264 (DCSQS) carry the MIDAS-like motif motif. The Mg(2+) site is built by Ser262 and Ser264. Residues Asn290 and Asn333 are each glycosylated (N-linked (GlcNAc...) asparagine). A Mg(2+)-binding site is contributed by Thr337. Intrachain disulfides connect Cys463/Cys581, Cys492/Cys508, and Cys584/Cys600. The 281-residue stretch at 464 to 744 (GVGNMSANAS…MQPWLRQHLG (281 aa)) folds into the Peptidase S1 domain. N-linked (GlcNAc...) asparagine glycans are attached at residues Asn467 and Asn471. Catalysis depends on charge relay system residues His507 and Asp561. N-linked (GlcNAc...) asparagine glycans are attached at residues Asn621 and Asn651. Cystine bridges form between Cys638–Cys665 and Cys675–Cys705. Catalysis depends on Ser679, which acts as the Charge relay system.

It belongs to the peptidase S1 family. Serine protease component of the C3 convertase, also named C4bC2b, composed of the serine protease complement C2b and complement C4b. Serine protease component of the C5 convertase, also named C4bC2bC3b, composed of the serine protease complement C2b, complement C3b, as well as complement C4b. Mg(2+) is required as a cofactor. Requires Mn(2+) as cofactor. In terms of processing, cleaved and activated by different proteases depending on the complement pathway to generate complement C2a and serine protease complement C2b chains. Cleaved and activated by C1S following activation by the classical complement system. Cleaved and activated by MASP2 following activation by the lectin complement system. Cleaved and activated by GZMK following activation by the GZMK complement system.

The protein resides in the secreted. The protein localises to the cell surface. The enzyme catalyses Selective cleavage of Arg-|-Ser bond in complement component C3 alpha-chain to form C3a and C3b, and Arg-|-Xaa bond in complement component C5 alpha-chain to form C5a and C5b.. Precursor of the catalytic component of the C3 and C5 convertase complexes, which are part of the complement pathway, a cascade of proteins that leads to phagocytosis and breakdown of pathogens and signaling that strengthens the adaptive immune system. Component C2 is part of the classical, lectin and GZMK complement systems. In terms of biological role, catalytic component of the complement C3 and C5 convertase complexes. Following complement activation, recruited to the surface of pathogens by complement C4b opsonin to form the C3 convertase, or C3b and C4b opsonins to form the C5 convertase. As part of the C3 convertase, cleaves and activate C3 into C3a anaphylatoxin and C3b opsonin, the next components of the complement pathways. As part of the C5 convertase, cleaves and activate C5 into C5a anaphylatoxin and C5b component of the membrane attack complex. The protein is Complement C2 of Pan troglodytes (Chimpanzee).